Reading from the N-terminus, the 558-residue chain is Arginine--tRNA ligase (558 aa).

The 'HIGH' region motif lies at 116-126 (ANPNGPLHVGH).

This sequence belongs to the class-I aminoacyl-tRNA synthetase family.

Its subcellular location is the cytoplasm. It carries out the reaction tRNA(Arg) + L-arginine + ATP = L-arginyl-tRNA(Arg) + AMP + diphosphate. This chain is Arginine--tRNA ligase, found in Methanocorpusculum labreanum (strain ATCC 43576 / DSM 4855 / Z).